A 22-amino-acid polypeptide reads, in one-letter code: NADH dehydrogenase [ubiquinone] 1 alpha subcomplex subunit 9 (22 aa).

The interval 1-22 is disordered; the sequence is ASNLATGGAGPLIXKGTGGRSS.

The protein belongs to the complex I NDUFA9 subunit family. Complex I is composed of about 45 different subunits. Requires FAD as cofactor.

Its subcellular location is the mitochondrion matrix. Functionally, accessory subunit of the mitochondrial membrane respiratory chain NADH dehydrogenase (Complex I), that is believed not to be involved in catalysis. Complex I functions in the transfer of electrons from NADH to the respiratory chain. The immediate electron acceptor for the enzyme is believed to be ubiquinone. The sequence is that of NADH dehydrogenase [ubiquinone] 1 alpha subcomplex subunit 9 from Solanum tuberosum (Potato).